The sequence spans 357 residues: Protein RecA (357 aa).

An ATP-binding site is contributed by 73–80; it reads GPESSGKT.

The protein belongs to the RecA family.

It localises to the cytoplasm. In terms of biological role, can catalyze the hydrolysis of ATP in the presence of single-stranded DNA, the ATP-dependent uptake of single-stranded DNA by duplex DNA, and the ATP-dependent hybridization of homologous single-stranded DNAs. It interacts with LexA causing its activation and leading to its autocatalytic cleavage. The polypeptide is Protein RecA (Nitratidesulfovibrio vulgaris (strain ATCC 29579 / DSM 644 / CCUG 34227 / NCIMB 8303 / VKM B-1760 / Hildenborough) (Desulfovibrio vulgaris)).